The chain runs to 56 residues: Large ribosomal subunit protein bL32 (56 aa).

The span at 1–16 (MAVQKSKKSRSMRGMR) shows a compositional bias: basic residues. A disordered region spans residues 1 to 33 (MAVQKSKKSRSMRGMRRSHDALTTSAVSVDATS). Residues 21-33 (ALTTSAVSVDATS) are compositionally biased toward polar residues.

It belongs to the bacterial ribosomal protein bL32 family.

In Aliivibrio fischeri (strain ATCC 700601 / ES114) (Vibrio fischeri), this protein is Large ribosomal subunit protein bL32.